Consider the following 214-residue polypeptide: MPATALSLPLDEIRYDERGLVPAIVQDYLDGTVLMLAWMNRESLQKTLETGRTWFWSRSRQELWPKGETSGHVQWVKSIRYDCDSDALLLTVEQVGHIACHTGERSCFHRHGAKGESIEPPPADTLSQVYNIVCQRRDFPQLQSYTSSLFTAGDNKILKKLGEETAEVVMACKDDDPEAIASEVADLFYHTLVALAYHRVSLRQVYEQLQLRRR.

Residues 1-125 (MPATALSLPL…ESIEPPPADT (125 aa)) are phosphoribosyl-AMP cyclohydrolase. The tract at residues 126–214 (LSQVYNIVCQ…VYEQLQLRRR (89 aa)) is phosphoribosyl-ATP pyrophosphohydrolase.

This sequence in the N-terminal section; belongs to the PRA-CH family. In the C-terminal section; belongs to the PRA-PH family.

The protein localises to the cytoplasm. The catalysed reaction is 1-(5-phospho-beta-D-ribosyl)-ATP + H2O = 1-(5-phospho-beta-D-ribosyl)-5'-AMP + diphosphate + H(+). The enzyme catalyses 1-(5-phospho-beta-D-ribosyl)-5'-AMP + H2O = 1-(5-phospho-beta-D-ribosyl)-5-[(5-phospho-beta-D-ribosylamino)methylideneamino]imidazole-4-carboxamide. It participates in amino-acid biosynthesis; L-histidine biosynthesis; L-histidine from 5-phospho-alpha-D-ribose 1-diphosphate: step 2/9. Its pathway is amino-acid biosynthesis; L-histidine biosynthesis; L-histidine from 5-phospho-alpha-D-ribose 1-diphosphate: step 3/9. The protein is Histidine biosynthesis bifunctional protein HisIE of Thermosynechococcus vestitus (strain NIES-2133 / IAM M-273 / BP-1).